Consider the following 258-residue polypeptide: Venom plasminogen activator GPV-PA (258 aa).

The first 18 residues, 1–18 (MVLIRVLANLLILQLSYA), serve as a signal peptide directing secretion. Residues 19-24 (QKSSEL) constitute a propeptide that is removed on maturation. The Peptidase S1 domain occupies 25–249 (VFGGRPCNIN…YTDWIQSIIA (225 aa)). Intrachain disulfides connect Cys31-Cys163, Cys50-Cys66, Cys98-Cys256, Cys142-Cys210, Cys174-Cys189, and Cys200-Cys225. Asn44 carries N-linked (GlcNAc...) asparagine glycosylation. Residues His65 and Asp110 each act as charge relay system in the active site. 2 N-linked (GlcNAc...) asparagine glycosylation sites follow: Asn121 and Asn185. Ser204 serves as the catalytic Charge relay system.

The protein belongs to the peptidase S1 family. Snake venom subfamily. As to quaternary structure, monomer. Expressed by the venom gland.

The protein localises to the secreted. Its function is as follows. Snake venom serine protease that activates plasminogen. This Trimeresurus albolabris (White-lipped pit viper) protein is Venom plasminogen activator GPV-PA.